The primary structure comprises 316 residues: Cytochrome c biogenesis protein CcsA (316 aa).

7 helical membrane-spanning segments follow: residues 15–35, 44–64, 71–91, 142–162, 220–240, 247–267, and 281–301; these read FSIC…TTIL, GIIT…IYSG, LYES…VAYL, MILS…LLVI, VISL…VWAN, WSWD…AIYL, and AIVA…VNLL.

This sequence belongs to the CcmF/CycK/Ccl1/NrfE/CcsA family. May interact with Ccs1.

Its subcellular location is the plastid. The protein localises to the chloroplast thylakoid membrane. Required during biogenesis of c-type cytochromes (cytochrome c6 and cytochrome f) at the step of heme attachment. The sequence is that of Cytochrome c biogenesis protein CcsA from Trachelium caeruleum (Blue throatwort).